Reading from the N-terminus, the 315-residue chain is Ribosomal RNA small subunit methyltransferase H (315 aa).

Residues 34 to 36 (GGH), D53, D100, and H107 contribute to the S-adenosyl-L-methionine site.

It belongs to the methyltransferase superfamily. RsmH family.

It localises to the cytoplasm. The enzyme catalyses cytidine(1402) in 16S rRNA + S-adenosyl-L-methionine = N(4)-methylcytidine(1402) in 16S rRNA + S-adenosyl-L-homocysteine + H(+). Functionally, specifically methylates the N4 position of cytidine in position 1402 (C1402) of 16S rRNA. The sequence is that of Ribosomal RNA small subunit methyltransferase H from Treponema denticola (strain ATCC 35405 / DSM 14222 / CIP 103919 / JCM 8153 / KCTC 15104).